A 498-amino-acid chain; its full sequence is ATP synthase subunit beta, chloroplastic (498 aa).

ATP is bound at residue 172–179; that stretch reads GGAGVGKT.

Belongs to the ATPase alpha/beta chains family. F-type ATPases have 2 components, CF(1) - the catalytic core - and CF(0) - the membrane proton channel. CF(1) has five subunits: alpha(3), beta(3), gamma(1), delta(1), epsilon(1). CF(0) has four main subunits: a(1), b(1), b'(1) and c(9-12).

It localises to the plastid. Its subcellular location is the chloroplast thylakoid membrane. It carries out the reaction ATP + H2O + 4 H(+)(in) = ADP + phosphate + 5 H(+)(out). Functionally, produces ATP from ADP in the presence of a proton gradient across the membrane. The catalytic sites are hosted primarily by the beta subunits. In Agapanthus africanus (Lily of the Nile), this protein is ATP synthase subunit beta, chloroplastic.